The chain runs to 308 residues: tRNA pseudouridine synthase B (308 aa).

The active-site Nucleophile is Asp-46.

This sequence belongs to the pseudouridine synthase TruB family. Type 1 subfamily.

The catalysed reaction is uridine(55) in tRNA = pseudouridine(55) in tRNA. Functionally, responsible for synthesis of pseudouridine from uracil-55 in the psi GC loop of transfer RNAs. This Marinomonas sp. (strain MWYL1) protein is tRNA pseudouridine synthase B.